A 176-amino-acid polypeptide reads, in one-letter code: Conjugal transfer protein TraF (176 aa).

Residues 1 to 24 form the signal peptide; it reads MSKRAVIRFLGVAGLVLSGATVMG.

It belongs to the peptidase S26C family.

It localises to the periplasm. Functionally, involved in conjugal transfer of the plasmid. This chain is Conjugal transfer protein TraF (traF), found in Agrobacterium fabrum (strain C58 / ATCC 33970) (Agrobacterium tumefaciens (strain C58)).